The primary structure comprises 501 residues: Glutamate--tRNA ligase (501 aa).

Residues 10–20 (PSPTGSLHIGG) carry the 'HIGH' region motif. The 'KMSKS' region signature appears at 251–255 (KLSKR). An ATP-binding site is contributed by Lys-254.

It belongs to the class-I aminoacyl-tRNA synthetase family. Glutamate--tRNA ligase type 1 subfamily. Monomer.

The protein resides in the cytoplasm. The catalysed reaction is tRNA(Glu) + L-glutamate + ATP = L-glutamyl-tRNA(Glu) + AMP + diphosphate. Functionally, catalyzes the attachment of glutamate to tRNA(Glu) in a two-step reaction: glutamate is first activated by ATP to form Glu-AMP and then transferred to the acceptor end of tRNA(Glu). This chain is Glutamate--tRNA ligase, found in Desulforudis audaxviator (strain MP104C).